The following is a 60-amino-acid chain: Probable tautomerase SAG1079 (60 aa).

Residue proline 2 is the Proton acceptor; via imino nitrogen of the active site.

Belongs to the 4-oxalocrotonate tautomerase family.

In Streptococcus agalactiae serotype V (strain ATCC BAA-611 / 2603 V/R), this protein is Probable tautomerase SAG1079.